The sequence spans 259 residues: Methanethiol S-methyltransferase 2 (259 aa).

Transmembrane regions (helical) follow at residues 5-25 (LAILLYAIVSYAAFTVSFLYA), 46-66 (LGEAILVNLLLMSLFAIQHSV), 88-108 (TYVLLSSLILLLLFWQWRPIP), 115-135 (SGIAAWLLIGVHWLGWLIAFA), and 182-202 (FLLAFWATPAMTAGHLLFALA).

It belongs to the nurim family.

It is found in the membrane. The enzyme catalyses methanethiol + S-adenosyl-L-methionine = dimethyl sulfide + S-adenosyl-L-homocysteine + H(+). Catalyzes the methylation of methanethiol (MeSH) to yield dimethylsulphide (DMS). This is Methanethiol S-methyltransferase 2 from Bradyrhizobium diazoefficiens (strain JCM 10833 / BCRC 13528 / IAM 13628 / NBRC 14792 / USDA 110).